The primary structure comprises 173 residues: Crossover junction endodeoxyribonuclease RuvC (173 aa).

Residues D8, E67, and D139 contribute to the active site. Residues D8, E67, and D139 each coordinate Mg(2+).

This sequence belongs to the RuvC family. In terms of assembly, homodimer which binds Holliday junction (HJ) DNA. The HJ becomes 2-fold symmetrical on binding to RuvC with unstacked arms; it has a different conformation from HJ DNA in complex with RuvA. In the full resolvosome a probable DNA-RuvA(4)-RuvB(12)-RuvC(2) complex forms which resolves the HJ. Mg(2+) serves as cofactor.

Its subcellular location is the cytoplasm. It catalyses the reaction Endonucleolytic cleavage at a junction such as a reciprocal single-stranded crossover between two homologous DNA duplexes (Holliday junction).. Functionally, the RuvA-RuvB-RuvC complex processes Holliday junction (HJ) DNA during genetic recombination and DNA repair. Endonuclease that resolves HJ intermediates. Cleaves cruciform DNA by making single-stranded nicks across the HJ at symmetrical positions within the homologous arms, yielding a 5'-phosphate and a 3'-hydroxyl group; requires a central core of homology in the junction. The consensus cleavage sequence is 5'-(A/T)TT(C/G)-3'. Cleavage occurs on the 3'-side of the TT dinucleotide at the point of strand exchange. HJ branch migration catalyzed by RuvA-RuvB allows RuvC to scan DNA until it finds its consensus sequence, where it cleaves and resolves the cruciform DNA. The chain is Crossover junction endodeoxyribonuclease RuvC from Vibrio vulnificus (strain YJ016).